The primary structure comprises 81 residues: Protein L83L (81 aa).

The disordered stretch occupies residues 1 to 28; it reads MDTSLKNNDGALDADNKNYQDYKDEPDK. Residues 14-28 are compositionally biased toward basic and acidic residues; that stretch reads ADNKNYQDYKDEPDK.

The protein belongs to the asfivirus L83L family. Interacts with host IL1B.

The protein localises to the host cytoplasm. In terms of biological role, may subvert the host innate immune response by interacting with host IL1B and interfering with its function. In African swine fever virus (isolate Tick/South Africa/Pretoriuskop Pr4/1996) (ASFV), this protein is Protein L83L.